The following is a 1197-amino-acid chain: Neural cell adhesion molecule L1.1 (1197 aa).

Ig-like C2-type domains follow at residues 1–58, 69–160, 165–263, 268–355, and 360–442; these read EFRQ…TAVS, PSLA…EPMS, PSNS…YTVT, PYWT…THVH, and PAQI…KSIS. The Extracellular portion of the chain corresponds to 1–1054; it reads EFRQRDPSPS…SPRNFATEGW (1054 aa). An intrachain disulfide couples Cys92 to Cys143. Residues Asn135, Asn149, Asn221, Asn298, Asn414, Asn421, Asn438, and Asn449 are each glycosylated (N-linked (GlcNAc...) asparagine). 3 disulfides stabilise this stretch: Cys199/Cys247, Cys289/Cys339, and Cys383/Cys432. Residues 451–541 form the Ig-like C2-type 6 domain; sequence TKIVGPPQNL…DSDTASGYIT (91 aa). A disulfide bond links Cys472 and Cys525. 5 consecutive Fibronectin type-III domains span residues 548-643, 645-742, 747-852, 853-952, and 953-1048; these read PPQS…TPAA, PDTN…SGED, APSA…TPEG, APGP…LLDG, and EPPS…SPRN. The segment covering 630 to 640 has biased composition (polar residues); the sequence is APTESSLSYST. Residues 630–655 are disordered; it reads APTESSLSYSTPAAKPDTNPENVMTL. An N-linked (GlcNAc...) asparagine glycan is attached at Asn708. Residues Asn959, Asn968, Asn1002, and Asn1027 are each glycosylated (N-linked (GlcNAc...) asparagine). Residues 1055–1075 form a helical membrane-spanning segment; sequence FIGLISALVLLLLVLLLLCYI. At 1076–1197 the chain is on the cytoplasmic side; sequence KKSKGGKYSV…TSVTGILGPN (122 aa). 2 disordered regions span residues 1115 to 1135 and 1154 to 1197; these read MEKC…SNDS and IGQY…LGPN.

This sequence belongs to the immunoglobulin superfamily. L1/neurofascin/NgCAM family. As to expression, expressed in postmitotic neurons in 16-36 hours embryos, including those in the brain, cranial ganglia and otic and olfactory placodes, and in all classes of spinal neurons.

Its subcellular location is the cell membrane. It is found in the cell projection. It localises to the growth cone. In terms of biological role, cell adhesion molecule with an important role in the development of the nervous system. Involved in neuron-neuron adhesion, neurite fasciculation, outgrowth of neurites, etc. Binds to axonin on neurons. In Danio rerio (Zebrafish), this protein is Neural cell adhesion molecule L1.1 (nadl1.1).